Here is an 84-residue protein sequence, read N- to C-terminus: Small ribosomal subunit protein bS20 (84 aa).

This sequence belongs to the bacterial ribosomal protein bS20 family.

Functionally, binds directly to 16S ribosomal RNA. The protein is Small ribosomal subunit protein bS20 of Levilactobacillus brevis (strain ATCC 367 / BCRC 12310 / CIP 105137 / JCM 1170 / LMG 11437 / NCIMB 947 / NCTC 947) (Lactobacillus brevis).